The chain runs to 143 residues: MKIPVFLLLLALANAKVFQRCEWARVLKARGMDGYRGISLADWVCLSKWESQYNTNAINHNTDGSTDYGIFQINSRWWCNDDRIPTRNACNIKCSALQTDDVTVAINCAKRVVSDPQGIRAWVAWNRHCQNRDLSAYIAGCGL.

An N-terminal signal peptide occupies residues M1 to A15. Positions K16–L143 constitute a C-type lysozyme domain. 4 disulfide bridges follow: C21-C141, C45-C129, C79-C94, and C90-C108. Active-site residues include E50 and D67.

It belongs to the glycosyl hydrolase 22 family. As to quaternary structure, monomer.

It localises to the secreted. The catalysed reaction is Hydrolysis of (1-&gt;4)-beta-linkages between N-acetylmuramic acid and N-acetyl-D-glucosamine residues in a peptidoglycan and between N-acetyl-D-glucosamine residues in chitodextrins.. Functionally, lysozymes have primarily a bacteriolytic function; those in tissues and body fluids are associated with the monocyte-macrophage system and enhance the activity of immunoagents. This Takifugu rubripes (Japanese pufferfish) protein is Lysozyme C.